The sequence spans 159 residues: Ribosomal RNA large subunit methyltransferase H (159 aa).

S-adenosyl-L-methionine contacts are provided by residues leucine 76, glycine 108, and 127–132 (FSKMTF).

It belongs to the RNA methyltransferase RlmH family. As to quaternary structure, homodimer.

It is found in the cytoplasm. The catalysed reaction is pseudouridine(1915) in 23S rRNA + S-adenosyl-L-methionine = N(3)-methylpseudouridine(1915) in 23S rRNA + S-adenosyl-L-homocysteine + H(+). In terms of biological role, specifically methylates the pseudouridine at position 1915 (m3Psi1915) in 23S rRNA. This is Ribosomal RNA large subunit methyltransferase H from Bifidobacterium adolescentis (strain ATCC 15703 / DSM 20083 / NCTC 11814 / E194a).